Consider the following 206-residue polypeptide: N-(5'-phosphoribosyl)anthranilate isomerase (206 aa).

The protein belongs to the TrpF family.

The catalysed reaction is N-(5-phospho-beta-D-ribosyl)anthranilate = 1-(2-carboxyphenylamino)-1-deoxy-D-ribulose 5-phosphate. It participates in amino-acid biosynthesis; L-tryptophan biosynthesis; L-tryptophan from chorismate: step 3/5. This Pseudomonas putida (strain ATCC 700007 / DSM 6899 / JCM 31910 / BCRC 17059 / LMG 24140 / F1) protein is N-(5'-phosphoribosyl)anthranilate isomerase.